The chain runs to 840 residues: DNA gyrase subunit A (840 aa).

In terms of domain architecture, Topo IIA-type catalytic spans 51 to 516; that stretch reads LPDVRDGFKP…VSSHIDDEDL (466 aa). Y139 acts as the O-(5'-phospho-DNA)-tyrosine intermediate in catalysis. The short motif at 543–549 is the GyrA-box element; sequence QRRGGVG.

The protein belongs to the type II topoisomerase GyrA/ParC subunit family. As to quaternary structure, heterotetramer, composed of two GyrA and two GyrB chains. In the heterotetramer, GyrA contains the active site tyrosine that forms a transient covalent intermediate with DNA, while GyrB binds cofactors and catalyzes ATP hydrolysis.

The protein localises to the cytoplasm. It catalyses the reaction ATP-dependent breakage, passage and rejoining of double-stranded DNA.. Functionally, a type II topoisomerase that negatively supercoils closed circular double-stranded (ds) DNA in an ATP-dependent manner to modulate DNA topology and maintain chromosomes in an underwound state. Negative supercoiling favors strand separation, and DNA replication, transcription, recombination and repair, all of which involve strand separation. Also able to catalyze the interconversion of other topological isomers of dsDNA rings, including catenanes and knotted rings. Type II topoisomerases break and join 2 DNA strands simultaneously in an ATP-dependent manner. This is DNA gyrase subunit A from Ureaplasma parvum serovar 3 (strain ATCC 700970).